A 95-amino-acid chain; its full sequence is Co-chaperonin GroES (95 aa).

Belongs to the GroES chaperonin family. In terms of assembly, heptamer of 7 subunits arranged in a ring. Interacts with the chaperonin GroEL.

The protein localises to the cytoplasm. Functionally, together with the chaperonin GroEL, plays an essential role in assisting protein folding. The GroEL-GroES system forms a nano-cage that allows encapsulation of the non-native substrate proteins and provides a physical environment optimized to promote and accelerate protein folding. GroES binds to the apical surface of the GroEL ring, thereby capping the opening of the GroEL channel. This Caldicellulosiruptor bescii (strain ATCC BAA-1888 / DSM 6725 / KCTC 15123 / Z-1320) (Anaerocellum thermophilum) protein is Co-chaperonin GroES.